The following is a 499-amino-acid chain: Bifunctional purine biosynthesis protein PurH (499 aa).

In terms of domain architecture, MGS-like spans 1-144 (MIKRALISVF…KNFKDVVVLT (144 aa)).

Belongs to the PurH family.

It catalyses the reaction (6R)-10-formyltetrahydrofolate + 5-amino-1-(5-phospho-beta-D-ribosyl)imidazole-4-carboxamide = 5-formamido-1-(5-phospho-D-ribosyl)imidazole-4-carboxamide + (6S)-5,6,7,8-tetrahydrofolate. It carries out the reaction IMP + H2O = 5-formamido-1-(5-phospho-D-ribosyl)imidazole-4-carboxamide. The protein operates within purine metabolism; IMP biosynthesis via de novo pathway; 5-formamido-1-(5-phospho-D-ribosyl)imidazole-4-carboxamide from 5-amino-1-(5-phospho-D-ribosyl)imidazole-4-carboxamide (10-formyl THF route): step 1/1. Its pathway is purine metabolism; IMP biosynthesis via de novo pathway; IMP from 5-formamido-1-(5-phospho-D-ribosyl)imidazole-4-carboxamide: step 1/1. This Clostridium botulinum (strain Kyoto / Type A2) protein is Bifunctional purine biosynthesis protein PurH.